Here is a 54-residue protein sequence, read N- to C-terminus: Photosystem II reaction center protein L (54 aa).

The helical transmembrane segment at 33–53 threads the bilayer; that stretch reads SLFWGLLLIFVLAVLFSSYIF.

This sequence belongs to the PsbL family. PSII is composed of 1 copy each of membrane proteins PsbA, PsbB, PsbC, PsbD, PsbE, PsbF, PsbH, PsbI, PsbJ, PsbK, PsbL, PsbM, PsbT, PsbX, PsbY, PsbZ, Psb30/Ycf12, at least 3 peripheral proteins of the oxygen-evolving complex and a large number of cofactors. It forms dimeric complexes.

It is found in the plastid. The protein localises to the chloroplast thylakoid membrane. Its function is as follows. One of the components of the core complex of photosystem II (PSII). PSII is a light-driven water:plastoquinone oxidoreductase that uses light energy to abstract electrons from H(2)O, generating O(2) and a proton gradient subsequently used for ATP formation. It consists of a core antenna complex that captures photons, and an electron transfer chain that converts photonic excitation into a charge separation. This subunit is found at the monomer-monomer interface and is required for correct PSII assembly and/or dimerization. This is Photosystem II reaction center protein L from Stigeoclonium helveticum (Green alga).